Here is a 326-residue protein sequence, read N- to C-terminus: GTP 3',8-cyclase (326 aa).

In terms of domain architecture, Radical SAM core spans Ser6–Glu220. Arg15 provides a ligand contact to GTP. 2 residues coordinate [4Fe-4S] cluster: Cys22 and Cys26. Residue Tyr28 participates in S-adenosyl-L-methionine binding. [4Fe-4S] cluster is bound at residue Cys29. Residue Arg65 participates in GTP binding. Gly69 contacts S-adenosyl-L-methionine. Thr96 serves as a coordination point for GTP. Ser120 contacts S-adenosyl-L-methionine. Lys157 serves as a coordination point for GTP. An S-adenosyl-L-methionine-binding site is contributed by Met191. [4Fe-4S] cluster is bound by residues Cys254 and Cys257. Arg259–Arg261 provides a ligand contact to GTP. Residue Cys271 coordinates [4Fe-4S] cluster.

This sequence belongs to the radical SAM superfamily. MoaA family. In terms of assembly, monomer and homodimer. Requires [4Fe-4S] cluster as cofactor.

It carries out the reaction GTP + AH2 + S-adenosyl-L-methionine = (8S)-3',8-cyclo-7,8-dihydroguanosine 5'-triphosphate + 5'-deoxyadenosine + L-methionine + A + H(+). It participates in cofactor biosynthesis; molybdopterin biosynthesis. Catalyzes the cyclization of GTP to (8S)-3',8-cyclo-7,8-dihydroguanosine 5'-triphosphate. In Geobacter sulfurreducens (strain ATCC 51573 / DSM 12127 / PCA), this protein is GTP 3',8-cyclase.